The following is an 88-amino-acid chain: UPF0495 protein DEHA2C16280g (88 aa).

Residues 25–47 traverse the membrane as a helical segment; sequence YPLFAAMGVAVASGCFFTYRHFA.

The protein belongs to the UPF0495 family.

The protein localises to the membrane. This Debaryomyces hansenii (strain ATCC 36239 / CBS 767 / BCRC 21394 / JCM 1990 / NBRC 0083 / IGC 2968) (Yeast) protein is UPF0495 protein DEHA2C16280g.